The following is a 355-amino-acid chain: Protein ATP1B4 (355 aa).

At 1–108 (MRRQLRSRRA…SLARTGQSWS (108 aa)) the chain is on the nuclear side. The tract at residues 33 to 77 (ADEEEEAEEEARVMVVPDLEEEEEEEEEKEEEEKEEEDSHSQETD) is disordered. The span at 50-68 (DLEEEEEEEEEKEEEEKEE) shows a compositional bias: acidic residues. The chain crosses the membrane as a helical; Signal-anchor for type II membrane protein span at residues 109–129 (LILVIYFFFYASLAAVITLCM). Residues 130-355 (YTLFLTISPY…RVIFTLNIET (226 aa)) are Perinuclear space-facing.

The protein belongs to the X(+)/potassium ATPases subunit beta family. In terms of assembly, associates with a SMAD7-transcriptional complex. Interacts with SNW1 and TOR1AIP1. Does not associate with known Na,K-ATPase alpha-subunits.

It localises to the nucleus inner membrane. Functionally, may act as a transcriptional coregulator during muscle development through its interaction with SNW1. Has lost its ancestral function as a Na,K-ATPase beta-subunit. The chain is Protein ATP1B4 (ATP1B4) from Bos taurus (Bovine).